Here is a 606-residue protein sequence, read N- to C-terminus: Gamma-aminobutyric acid receptor subunit beta (606 aa).

The signal sequence occupies residues 1 to 44; it reads MSDSKMDKLARMAPLPRTPLLTIWLAINMALIAQETGHKRIHTV. Residues 45–268 are Extracellular-facing; sequence QAATGGGSML…CEIQFVRSMG (224 aa). Asparagine 58 is a glycosylation site (N-linked (GlcNAc...) asparagine). An intrachain disulfide couples cysteine 185 to cysteine 199. N-linked (GlcNAc...) asparagine glycosylation is present at asparagine 253. The next 3 membrane-spanning stretches (helical) occupy residues 269–291, 297–316, and 333–356; these read YYLI…SFWL, PARV…LMSS, and YLGT…YMAK. Residues 357–568 are Cytoplasmic-facing; sequence RIQMRKQRFM…LGITPSDIDK (212 aa). Disordered stretches follow at residues 376-451 and 482-542; these read KQQL…VSNR and HDPK…AAVP. Residues 381–395 show a composition bias toward low complexity; the sequence is GANQQQANPNPNANV. Residues 396–425 are compositionally biased toward gly residues; it reads GGPGGVGVGPGGPGGPGGGVNVGVGMGMGP. Basic residues predominate over residues 430–443; sequence GHGHHAHSHGHPHA. The span at 499-536 shows a compositional bias: gly residues; the sequence is GGRGGPQSHGPGPGQGGGPPGGGGGGGGGGGPPEGGGD. The helical transmembrane segment at 569–590 threads the bilayer; the sequence is YSRIVFPVCFVCFNLMYWIIYL.

It belongs to the ligand-gated ion channel (TC 1.A.9) family. Gamma-aminobutyric acid receptor (TC 1.A.9.5) subfamily.

It is found in the postsynaptic cell membrane. The protein localises to the cell membrane. In terms of biological role, GABA, an inhibitory neurotransmitter, mediates neuronal inhibition by binding to the GABA receptor and opening an integral chloride channel. This chain is Gamma-aminobutyric acid receptor subunit beta (Rdl), found in Drosophila simulans (Fruit fly).